The chain runs to 343 residues: 3-dehydroquinate synthase (343 aa).

NAD(+) contacts are provided by residues 61–66 (SGEKYK), 95–99 (GVISD), 119–120 (TT), Lys-132, Lys-141, and 159–162 (FLKT). Zn(2+) is bound by residues Glu-174, His-231, and His-248.

Belongs to the sugar phosphate cyclases superfamily. Dehydroquinate synthase family. The cofactor is Co(2+). Zn(2+) serves as cofactor. NAD(+) is required as a cofactor.

It localises to the cytoplasm. The catalysed reaction is 7-phospho-2-dehydro-3-deoxy-D-arabino-heptonate = 3-dehydroquinate + phosphate. It functions in the pathway metabolic intermediate biosynthesis; chorismate biosynthesis; chorismate from D-erythrose 4-phosphate and phosphoenolpyruvate: step 2/7. Catalyzes the conversion of 3-deoxy-D-arabino-heptulosonate 7-phosphate (DAHP) to dehydroquinate (DHQ). This chain is 3-dehydroquinate synthase, found in Helicobacter pylori (strain HPAG1).